The chain runs to 329 residues: Acetyl-coenzyme A carboxylase carboxyl transferase subunit alpha (329 aa).

The CoA carboxyltransferase C-terminal domain occupies 40-294; sequence QLETLAARRR…KESLIRNLRE (255 aa).

Belongs to the AccA family. As to quaternary structure, acetyl-CoA carboxylase is a heterohexamer composed of biotin carboxyl carrier protein (AccB), biotin carboxylase (AccC) and two subunits each of ACCase subunit alpha (AccA) and ACCase subunit beta (AccD).

Its subcellular location is the cytoplasm. The enzyme catalyses N(6)-carboxybiotinyl-L-lysyl-[protein] + acetyl-CoA = N(6)-biotinyl-L-lysyl-[protein] + malonyl-CoA. It functions in the pathway lipid metabolism; malonyl-CoA biosynthesis; malonyl-CoA from acetyl-CoA: step 1/1. In terms of biological role, component of the acetyl coenzyme A carboxylase (ACC) complex. First, biotin carboxylase catalyzes the carboxylation of biotin on its carrier protein (BCCP) and then the CO(2) group is transferred by the carboxyltransferase to acetyl-CoA to form malonyl-CoA. The chain is Acetyl-coenzyme A carboxylase carboxyl transferase subunit alpha from Prochlorococcus marinus (strain MIT 9211).